Reading from the N-terminus, the 207-residue chain is Large ribosomal subunit protein uL4 (207 aa).

The segment at alanine 58–isoleucine 78 is disordered. Basic residues predominate over residues lysine 63 to serine 77.

The protein belongs to the universal ribosomal protein uL4 family. As to quaternary structure, part of the 50S ribosomal subunit.

Functionally, one of the primary rRNA binding proteins, this protein initially binds near the 5'-end of the 23S rRNA. It is important during the early stages of 50S assembly. It makes multiple contacts with different domains of the 23S rRNA in the assembled 50S subunit and ribosome. Its function is as follows. Forms part of the polypeptide exit tunnel. The protein is Large ribosomal subunit protein uL4 of Aster yellows witches'-broom phytoplasma (strain AYWB).